Here is a 138-residue protein sequence, read N- to C-terminus: Large ribosomal subunit protein uL16 (138 aa).

Belongs to the universal ribosomal protein uL16 family. As to quaternary structure, part of the 50S ribosomal subunit.

Its function is as follows. Binds 23S rRNA and is also seen to make contacts with the A and possibly P site tRNAs. In Rubrobacter xylanophilus (strain DSM 9941 / JCM 11954 / NBRC 16129 / PRD-1), this protein is Large ribosomal subunit protein uL16.